A 101-amino-acid chain; its full sequence is Large ribosomal subunit protein uL6m (101 aa).

Belongs to the universal ribosomal protein uL6 family.

It localises to the mitochondrion. The sequence is that of Large ribosomal subunit protein uL6m (RPL6) from Marchantia polymorpha (Common liverwort).